The primary structure comprises 345 residues: Dimethyladenosine transferase 1, mitochondrial (345 aa).

A mitochondrion-targeting transit peptide spans 1-27 (MAAPGKLSTCRLPPLPTIREIIKLFRL). Positions 38, 63, 85, 86, 111, 112, and 141 each coordinate S-adenosyl-L-methionine.

This sequence belongs to the class I-like SAM-binding methyltransferase superfamily. rRNA adenine N(6)-methyltransferase family. KsgA subfamily. As to quaternary structure, interacts with mitochondrial RNA polymerase POLRMT. Interacts with TFAM. Bound to the maturing mtSSU until the late stages of assembly.

It localises to the mitochondrion. It carries out the reaction adenosine(N)/adenosine(N+1) in rRNA + 4 S-adenosyl-L-methionine = N(6)-dimethyladenosine(N)/N(6)-dimethyladenosine(N+1) in rRNA + 4 S-adenosyl-L-homocysteine + 4 H(+). Functionally, mitochondrial methyltransferase which uses S-adenosyl methionine to dimethylate two highly conserved adjacent adenosine residues (A1583 and A1584) within the loop of helix 45 at the 3-prime end of 12S rRNA, thereby regulating the assembly or stability of the small subunit of the mitochondrial ribosome. Also required for basal transcription of mitochondrial DNA, probably via its interaction with POLRMT and TFAM. Stimulates transcription independently of the methyltransferase activity. This Macaca fascicularis (Crab-eating macaque) protein is Dimethyladenosine transferase 1, mitochondrial (TFB1M).